An 87-amino-acid chain; its full sequence is Putative phytosulfokines 4 (87 aa).

An N-terminal signal peptide occupies residues 1–23 (MANLSTLITIALLLCATMLTCSA). Positions 24-77 (RPEPAYFASFTTSPADTLSLEMIESKLHEVAGESCDKEDDEDCLVRRTLTAHLD) are excised as a propeptide. Sulfotyrosine occurs at positions 78 and 80. Positions 83 to 87 (KNNHH) are excised as a propeptide.

Belongs to the phytosulfokine family. Post-translationally, sulfation is important for activity and for the binding to a putative membrane receptor.

It is found in the secreted. Promotes plant cell differentiation, organogenesis and somatic embryogenesis as well as cell proliferation. The polypeptide is Putative phytosulfokines 4 (PSK4) (Arabidopsis thaliana (Mouse-ear cress)).